Consider the following 215-residue polypeptide: Probable transaldolase (215 aa).

The active-site Schiff-base intermediate with substrate is Lys-83.

This sequence belongs to the transaldolase family. Type 3B subfamily.

Its subcellular location is the cytoplasm. The enzyme catalyses D-sedoheptulose 7-phosphate + D-glyceraldehyde 3-phosphate = D-erythrose 4-phosphate + beta-D-fructose 6-phosphate. The protein operates within carbohydrate degradation; pentose phosphate pathway; D-glyceraldehyde 3-phosphate and beta-D-fructose 6-phosphate from D-ribose 5-phosphate and D-xylulose 5-phosphate (non-oxidative stage): step 2/3. Its function is as follows. Transaldolase is important for the balance of metabolites in the pentose-phosphate pathway. The polypeptide is Probable transaldolase (Methanococcus maripaludis (strain DSM 14266 / JCM 13030 / NBRC 101832 / S2 / LL)).